The sequence spans 715 residues: Putative membrane protein IgaA homolog (715 aa).

The next 5 helical transmembrane spans lie at serine 2–tryptophan 22, glutamate 214–valine 234, threonine 235–phenylalanine 255, asparagine 349–leucine 369, and alanine 663–isoleucine 683.

It belongs to the IgaA family.

It localises to the cell inner membrane. The chain is Putative membrane protein IgaA homolog from Yersinia pestis.